Reading from the N-terminus, the 299-residue chain is Probable alpha-L-glutamate ligase 2 (299 aa).

The ATP-grasp domain occupies 104 to 287; sequence MQLMSRRGIG…VAGAIIEFVE (184 aa). ATP contacts are provided by residues lysine 141, 178 to 179, aspartate 187, and 211 to 213; these read EY and RSN. 3 residues coordinate Mg(2+): aspartate 248, glutamate 260, and asparagine 262. Aspartate 248, glutamate 260, and asparagine 262 together coordinate Mn(2+).

The protein belongs to the RimK family. The cofactor is Mg(2+). It depends on Mn(2+) as a cofactor.

The polypeptide is Probable alpha-L-glutamate ligase 2 (Shewanella sp. (strain MR-4)).